We begin with the raw amino-acid sequence, 1108 residues long: Activity-dependent neuroprotector homeobox protein (1108 aa).

The interval methionine 1–histidine 685 is binds to beta-catenin/CTNNB1. Residues lysine 39 and lysine 72 each participate in a glycyl lysine isopeptide (Lys-Gly) (interchain with G-Cter in SUMO2) cross-link. The C2H2-type 1; degenerate zinc finger occupies phenylalanine 74–histidine 97. Position 98 is a phosphoserine (serine 98). The segment at leucine 107–histidine 129 adopts a C2H2-type 2; degenerate zinc-finger fold. A disordered region spans residues serine 133–proline 154. The span at phenylalanine 143–proline 154 shows a compositional bias: basic and acidic residues. Residues lysine 144 and lysine 155 each participate in a glycyl lysine isopeptide (Lys-Gly) (interchain with G-Cter in SUMO2) cross-link. The C2H2-type 3; degenerate zinc-finger motif lies at tyrosine 165–histidine 188. Glycyl lysine isopeptide (Lys-Gly) (interchain with G-Cter in SUMO2) cross-links involve residues lysine 203, lysine 231, lysine 266, lysine 274, lysine 278, lysine 279, lysine 311, and lysine 335. The C2H2-type 4; degenerate zinc-finger motif lies at isoleucine 221–histidine 244. Arginine 348 is modified (asymmetric dimethylarginine). The interval asparagine 354–glutamine 361 is neuroprotective peptide; contributes to CTNNB1-binding, but less effective than whole N-terminal region. Residues proline 360–asparagine 438 form a disordered region. Residues lysine 367 and lysine 407 each participate in a glycyl lysine isopeptide (Lys-Gly) (interchain with G-Cter in SUMO2) cross-link. Residues serine 393–glutamine 422 show a composition bias toward polar residues. Residues serine 408 and serine 412 each carry the phosphoserine modification. A Glycyl lysine isopeptide (Lys-Gly) (interchain with G-Cter in SUMO2) cross-link involves residue lysine 426. Pro residues predominate over residues lysine 426 to serine 437. Residues lysine 446–histidine 468 form a C2H2-type 5; atypical zinc finger. 2 C2H2-type zinc fingers span residues serine 488–histidine 509 and leucine 511–histidine 534. Residues lysine 599 and lysine 605 each participate in a glycyl lysine isopeptide (Lys-Gly) (interchain with G-Cter in SUMO2) cross-link. Phosphoserine is present on serine 607. Residues lysine 615, lysine 620, lysine 631, and lysine 657 each participate in a glycyl lysine isopeptide (Lys-Gly) (interchain with G-Cter in SUMO2) cross-link. The segment at threonine 621 to histidine 646 adopts a C2H2-type 8; atypical zinc-finger fold. The segment at tyrosine 661–histidine 685 adopts a C2H2-type 9; atypical zinc-finger fold. A disordered region spans residues glycine 690–leucine 711. Residues lysine 691–proline 709 show a composition bias toward polar residues. Residue lysine 698 forms a Glycyl lysine isopeptide (Lys-Gly) (interchain with G-Cter in SUMO2) linkage. At serine 708 the chain carries Phosphoserine. Residues lysine 715, lysine 727, and lysine 730 each participate in a glycyl lysine isopeptide (Lys-Gly) (interchain with G-Cter in SUMO2) cross-link. Position 737 is a phosphoserine (serine 737). Lysine 744 is covalently cross-linked (Glycyl lysine isopeptide (Lys-Gly) (interchain with G-Cter in SUMO2)). The homeobox DNA-binding region spans leucine 753–aspartate 813. Phosphoserine is present on serine 804. Glycyl lysine isopeptide (Lys-Gly) (interchain with G-Cter in SUMO2) cross-links involve residues lysine 806, lysine 828, and lysine 834. Residues lysine 851–histidine 880 show a composition bias toward basic and acidic residues. Residues lysine 851–serine 1037 are disordered. Phosphoserine is present on residues serine 875, serine 877, serine 885, serine 888, and serine 904. Residues lysine 913, lysine 928, and lysine 941 each participate in a glycyl lysine isopeptide (Lys-Gly) (interchain with G-Cter in SUMO2) cross-link. Over residues lysine 928–aspartate 938 the composition is skewed to acidic residues. A compositionally biased stretch (basic and acidic residues) spans glycine 939–serine 959. 2 positions are modified to phosphoserine: serine 959 and serine 961. A compositionally biased stretch (polar residues) spans proline 977–serine 988. A Glycyl lysine isopeptide (Lys-Gly) (interchain with G-Cter in SUMO2) cross-link involves residue lysine 1022. 2 positions are modified to N6-acetyllysine; alternate: lysine 1041 and lysine 1048. Residues lysine 1041 and lysine 1048 each participate in a glycyl lysine isopeptide (Lys-Gly) (interchain with G-Cter in SUMO2); alternate cross-link. Residues glutamine 1050–alanine 1108 are disordered. A Phosphoserine modification is found at serine 1077.

Interacts (via N-terminal region) with beta-catenin/CTNNB1 (via the central armadillo domains); interaction is direct and stabilizes CTNNB1 by modulating its phosphorylation by glycogen synthase kinase-3 beta GSK3B. As to expression, expressed in the brain, with a higher expression in cerebellum and hippocampus. Weakly expressed in lung, kidney and intestine, and expressed at intermediate level in testis.

It localises to the nucleus. Its subcellular location is the chromosome. In terms of biological role, may be involved in transcriptional regulation. May mediate some of the neuroprotective peptide VIP-associated effects involving normal growth and cancer proliferation. Positively modulates WNT-beta-catenin/CTNN1B signaling, acting by regulating phosphorylation of, and thereby stabilizing, CTNNB1. May be required for neural induction and neuronal differentiation. May be involved in erythroid differentiation. The polypeptide is Activity-dependent neuroprotector homeobox protein (Adnp) (Mus musculus (Mouse)).